The following is a 378-amino-acid chain: UPF0754 membrane protein BCQ_0944 (378 aa).

2 helical membrane-spanning segments follow: residues methionine 1–threonine 21 and tyrosine 357–leucine 377.

Belongs to the UPF0754 family.

The protein resides in the cell membrane. The chain is UPF0754 membrane protein BCQ_0944 from Bacillus cereus (strain Q1).